A 223-amino-acid chain; its full sequence is ATP-dependent dethiobiotin synthetase BioD (223 aa).

Mg(2+) is bound at residue Thr16. The active site involves Lys37. Ser41 is a substrate binding site. Residues Asp50 and Glu111 each coordinate Mg(2+). Residues Asp50, 111–114, 171–172, 201–203, and Glu208 each bind ATP; these read EGAG, NQ, and AHV.

It belongs to the dethiobiotin synthetase family. As to quaternary structure, homodimer. Mg(2+) is required as a cofactor.

It localises to the cytoplasm. It catalyses the reaction (7R,8S)-7,8-diammoniononanoate + CO2 + ATP = (4R,5S)-dethiobiotin + ADP + phosphate + 3 H(+). It functions in the pathway cofactor biosynthesis; biotin biosynthesis; biotin from 7,8-diaminononanoate: step 1/2. Its function is as follows. Catalyzes a mechanistically unusual reaction, the ATP-dependent insertion of CO2 between the N7 and N8 nitrogen atoms of 7,8-diaminopelargonic acid (DAPA, also called 7,8-diammoniononanoate) to form a ureido ring. This is ATP-dependent dethiobiotin synthetase BioD from Anaeromyxobacter sp. (strain Fw109-5).